A 925-amino-acid polypeptide reads, in one-letter code: Protein PDC2 (925 aa).

Residues 63–138 form the HTH CENPB-type domain; sequence DANRLRKPNN…LSKMDVNISV (76 aa). Disordered regions lie at residues 510 to 596, 674 to 693, and 904 to 925; these read DNNQ…RNSS, NEKAASDQNKSTDELPSSTA, and PTGGSNLPDSNNLHLPGNTGFF. Positions 513 to 537 are enriched in polar residues; sequence QNHLSMSQASHNPDYNSNHSNNAIE. Residues 538 to 563 are compositionally biased toward low complexity; the sequence is NTNNRGSNNNNNNNGSSNNINDNDSS. Polar residues predominate over residues 565 to 596; the sequence is KYLQQNTVDNSTKTGNPGQPNISSMESQRNSS. The segment covering 674–686 has biased composition (basic and acidic residues); sequence NEKAASDQNKSTD. The span at 904–916 shows a compositional bias: polar residues; sequence PTGGSNLPDSNNL.

In terms of biological role, essential for the synthesis of pyruvate decarboxylase. May be important for a high basal level of PDC gene expression or play a positive role in the autoregulation control of PDC1 and PDC5. The sequence is that of Protein PDC2 (PDC2) from Saccharomyces cerevisiae (strain ATCC 204508 / S288c) (Baker's yeast).